Here is a 546-residue protein sequence, read N- to C-terminus: Glutathione synthetase, chloroplastic (546 aa).

The transit peptide at 1-63 (MGSGCSSPSI…SPLKCAKVPE (63 aa)) directs the protein to the chloroplast. Arginine 200 contacts substrate. Residue glutamate 216 coordinates ATP. Positions 216 and 218 each coordinate Mg(2+). Substrate is bound by residues 220–223 (ISSS), 288–290 (ERN), glutamine 294, and 342–345 (RAGY). ATP contacts are provided by residues lysine 381, 435–444 (KPQREGGGNN), tyrosine 446, 471–474 (MQRI), and glutamate 497. Residue glutamate 439 coordinates Mg(2+). Arginine 522 serves as a coordination point for substrate. ATP-binding residues include lysine 524 and glutamate 530. 533–534 (VA) is a binding site for substrate.

It belongs to the eukaryotic GSH synthase family. Homodimer. Requires Mg(2+) as cofactor.

It localises to the plastid. Its subcellular location is the chloroplast. It catalyses the reaction gamma-L-glutamyl-L-cysteine + glycine + ATP = glutathione + ADP + phosphate + H(+). It functions in the pathway sulfur metabolism; glutathione biosynthesis; glutathione from L-cysteine and L-glutamate: step 2/2. The sequence is that of Glutathione synthetase, chloroplastic (GSH2) from Solanum lycopersicum (Tomato).